The primary structure comprises 192 residues: Casparian strip membrane protein 1 (192 aa).

Residues 1–26 (MTKSVRLEEGDASKVLVPVGSNKGVS) lie on the Cytoplasmic side of the membrane. Residues 27 to 47 (VMDLVLRLVGIAGTLGAAIAM) traverse the membrane as a helical segment. The Extracellular segment spans residues 48–75 (GTNEQTLPFFTRFVVFNAEYDDFRSFRL). A helical membrane pass occupies residues 76–96 (FVIVNAIVCAYFVLTLPLSIV). The Cytoplasmic segment spans residues 97-107 (HIMRSAARGSR). The chain crosses the membrane as a helical span at residues 108–128 (ILLIIMDTVMLALLTAGASAA). Residues 129–161 (ASIVYLAHNGNTSTNWLPVCQQYGDFCQGASGS) lie on the Extracellular side of the membrane. Asn-139 carries an N-linked (GlcNAc...) asparagine glycan. A helical membrane pass occupies residues 162–182 (LIGSFGAVVVFILIILLGAIA). Residues 183 to 192 (LSRHAKRVVL) lie on the Cytoplasmic side of the membrane.

Belongs to the Casparian strip membrane proteins (CASP) family. In terms of assembly, homodimer and heterodimers.

Its subcellular location is the cell membrane. Regulates membrane-cell wall junctions and localized cell wall deposition. Required for establishment of the Casparian strip membrane domain (CSD) and the subsequent formation of Casparian strips, a cell wall modification of the root endodermis that determines an apoplastic barrier between the intraorganismal apoplasm and the extraorganismal apoplasm and prevents lateral diffusion. This Lactuca saligna (Willowleaf lettuce) protein is Casparian strip membrane protein 1.